A 226-amino-acid polypeptide reads, in one-letter code: 7-cyano-7-deazaguanine synthase (226 aa).

10–20 is a binding site for ATP; it reads LSGGLDSATAA. Residues C191, C199, C202, and C205 each contribute to the Zn(2+) site.

This sequence belongs to the QueC family. It depends on Zn(2+) as a cofactor.

It catalyses the reaction 7-carboxy-7-deazaguanine + NH4(+) + ATP = 7-cyano-7-deazaguanine + ADP + phosphate + H2O + H(+). The protein operates within purine metabolism; 7-cyano-7-deazaguanine biosynthesis. In terms of biological role, catalyzes the ATP-dependent conversion of 7-carboxy-7-deazaguanine (CDG) to 7-cyano-7-deazaguanine (preQ(0)). In Prochlorococcus marinus (strain MIT 9303), this protein is 7-cyano-7-deazaguanine synthase.